We begin with the raw amino-acid sequence, 247 residues long: Cell division protein ZapD (247 aa).

The protein belongs to the ZapD family. As to quaternary structure, interacts with FtsZ.

The protein localises to the cytoplasm. Its function is as follows. Cell division factor that enhances FtsZ-ring assembly. Directly interacts with FtsZ and promotes bundling of FtsZ protofilaments, with a reduction in FtsZ GTPase activity. The chain is Cell division protein ZapD from Shigella flexneri.